The following is a 101-amino-acid chain: uncharacterized protein (101 aa).

A compositionally biased stretch (basic residues) spans 1 to 12 (MAAFQHRAKRSK). 2 disordered regions span residues 1–30 (MAAF…KKRA) and 65–87 (AQDQ…NVDK). A compositionally biased stretch (low complexity) spans 65–78 (AQDQRSDAQAQQQR).

This is an uncharacterized protein from Eremothecium gossypii (strain ATCC 10895 / CBS 109.51 / FGSC 9923 / NRRL Y-1056) (Yeast).